A 168-amino-acid polypeptide reads, in one-letter code: Diphosphoinositol polyphosphate phosphohydrolase 1 (168 aa).

M1 is modified (N-acetylmethionine). Substrate is bound by residues R10, 18-20 (KKR), and 39-41 (SSR). Residues 17–142 (YKKRAACLCF…KPVQASYFEA (126 aa)) enclose the Nudix hydrolase domain. Mg(2+) contacts are provided by G50 and E66. Residues 51 to 72 (GGMEPEEEPSVAAVREVCEEAG) carry the Nudix box motif. E69 (proton acceptor) is an active-site residue. Residue E70 coordinates Mg(2+). Substrate-binding positions include 89-91 (RKH), R115, and K133.

The protein belongs to the Nudix hydrolase family. DIPP subfamily. In terms of assembly, monomer. Requires Mg(2+) as cofactor. Mn(2+) serves as cofactor. It depends on Zn(2+) as a cofactor.

The protein resides in the cytoplasm. It localises to the nucleus. It carries out the reaction diphospho-myo-inositol polyphosphate + H2O = myo-inositol polyphosphate + phosphate.. It catalyses the reaction 5-diphospho-1D-myo-inositol 1,2,3,4,6-pentakisphosphate + H2O = 1D-myo-inositol hexakisphosphate + phosphate + H(+). The enzyme catalyses 3,5-bis(diphospho)-1D-myo-inositol 1,2,4,6-tetrakisphosphate + H2O = 3-diphospho-1D-myo-inositol 1,2,4,5,6-pentakisphosphate + phosphate + 2 H(+). The catalysed reaction is [phosphate](n+1) + n H2O = (n+1) phosphate + n H(+). It carries out the reaction P(1),P(5)-bis(5'-adenosyl) pentaphosphate + H2O = ADP + ATP + 2 H(+). It catalyses the reaction P(1),P(6)-bis(5'-adenosyl) hexaphosphate + H2O = 2 ATP + 2 H(+). The enzyme catalyses P(1),P(4)-bis(5'-adenosyl) tetraphosphate + H2O = AMP + ATP + 2 H(+). The catalysed reaction is a 5'-end (N(7)-methyl 5'-triphosphoguanosine)-ribonucleoside in mRNA + H2O = N(7)-methyl-GMP + a 5'-end diphospho-ribonucleoside in mRNA + 2 H(+). It carries out the reaction a 5'-end (N(7)-methyl 5'-triphosphoguanosine)-ribonucleoside in mRNA + H2O = N(7)-methyl-GDP + a 5'-end phospho-ribonucleoside in mRNA + 2 H(+). Its activity is regulated as follows. Diphosphoinositol polyphosphate phosphohydrolase is inhibited by fluoride and InsP6. Functionally, cleaves a beta-phosphate from the diphosphate groups in PP-InsP5 (diphosphoinositol pentakisphosphate) and [PP]2-InsP4 (bisdiphosphoinositol tetrakisphosphate), suggesting that it may play a role in signal transduction. InsP6 (inositol hexakisphosphate) is not a substrate. Acts as a negative regulator of the ERK1/2 pathway. Also able to catalyze the hydrolysis of dinucleoside oligophosphates, with diadenosine 5',5'''-P1,P6-hexaphosphate (Ap6A) and diadenosine 5',5'''- P1,P5-pentaphosphate (Ap5A) being the preferred substrates. The major reaction products are ADP and p4a from Ap6A and ADP and ATP from Ap5A. Also able to hydrolyze 5- phosphoribose 1-diphosphate. Acts as a decapping enzyme that can hydrolyze both monomethylated and unmethylated capped RNAs. Hydrolyzes monomethylated capped RNA after both the alpha- and beta-phosphates generating m7GMP + ppRNA and m7GDP + pRNA. Modulates the stability of a subset of mRNAs implicated in cell motility. Divalent cations zinc, magnesium and manganese determine its substrate specificity. Exhibits endopolyphosphatase activity in the presence of zinc ions. Exhibits diphosphoinositol polyphosphate phosphohydrolase in the presence of magnesium ions and diadenosine hexaphosphate hydrolase activity in the presence of manganese ions. Plays an important role in limiting DNA damage and maintaining cell survival upon oxidative stress via its endopolyphosphatase activity. The chain is Diphosphoinositol polyphosphate phosphohydrolase 1 from Rattus norvegicus (Rat).